Here is a 287-residue protein sequence, read N- to C-terminus: MSQKEIWYETLHANFGQYFSVDRVLYHEKTDHQDLIIFENDALGRVMALDGVVQTTERDEFIYHEMLTHVPLLSHGNAKRVLIIGGGDGGMLREVSRHHGVEQITMVEIDAGVVEFCRQYLPNHSAGSYDDPRFNLVIDDGVNFVRQCSEKFDVIISDCTDPIGPGESLFTSDFYQGCARSLNEGGIFVAQNGVCFLQQDEAIGSHKKLSHYFNDVSFYQAAIPTYYGGIMTFAWASNNPALRQMDIVTLRQHFAQSGITCRYYTPDVHIGSFALPQYLLSALQNAQ.

The region spanning 5-238 is the PABS domain; sequence EIWYETLHAN…GIMTFAWASN (234 aa). Gln33 contributes to the S-methyl-5'-thioadenosine binding site. Residues His64 and Asp88 each contribute to the spermidine site. S-methyl-5'-thioadenosine contacts are provided by residues Glu108 and 140–141; that span reads DG. The active-site Proton acceptor is the Asp158. 158–161 provides a ligand contact to spermidine; the sequence is DCTD. Pro165 contacts S-methyl-5'-thioadenosine.

The protein belongs to the spermidine/spermine synthase family. As to quaternary structure, homodimer or homotetramer.

It is found in the cytoplasm. The enzyme catalyses S-adenosyl 3-(methylsulfanyl)propylamine + putrescine = S-methyl-5'-thioadenosine + spermidine + H(+). It functions in the pathway amine and polyamine biosynthesis; spermidine biosynthesis; spermidine from putrescine: step 1/1. Catalyzes the irreversible transfer of a propylamine group from the amino donor S-adenosylmethioninamine (decarboxy-AdoMet) to putrescine (1,4-diaminobutane) to yield spermidine. The sequence is that of Polyamine aminopropyltransferase from Pectobacterium atrosepticum (strain SCRI 1043 / ATCC BAA-672) (Erwinia carotovora subsp. atroseptica).